Here is a 563-residue protein sequence, read N- to C-terminus: Methylcrotonoyl-CoA carboxylase beta chain, mitochondrial (563 aa).

Residues Met1–Ala22 constitute a mitochondrion transit peptide. A CoA carboxyltransferase N-terminal domain is found at Met49–Pro306. A carboxyltransferase region spans residues Met49–Lys555. Lys70 carries the N6-acetyllysine; alternate modification. Position 70 is an N6-succinyllysine; alternate (Lys70). N6-succinyllysine is present on Lys141. The CoA carboxyltransferase C-terminal domain maps to Glu309 to Lys555. The segment at Arg343–Asn372 is acyl-CoA binding. Lys495 bears the N6-acetyllysine; alternate mark. N6-succinyllysine; alternate is present on Lys495. Lys511 is subject to N6-acetyllysine.

Belongs to the AccD/PCCB family. As to quaternary structure, probably a dodecamer composed of six biotin-containing alpha subunits (MCCC1) and six beta (MCCC2) subunits.

The protein resides in the mitochondrion matrix. The catalysed reaction is 3-methylbut-2-enoyl-CoA + hydrogencarbonate + ATP = 3-methyl-(2E)-glutaconyl-CoA + ADP + phosphate + H(+). It functions in the pathway amino-acid degradation; L-leucine degradation; (S)-3-hydroxy-3-methylglutaryl-CoA from 3-isovaleryl-CoA: step 2/3. Carboxyltransferase subunit of the 3-methylcrotonyl-CoA carboxylase, an enzyme that catalyzes the conversion of 3-methylcrotonyl-CoA to 3-methylglutaconyl-CoA, a critical step for leucine and isovaleric acid catabolism. This Homo sapiens (Human) protein is Methylcrotonoyl-CoA carboxylase beta chain, mitochondrial (MCCC2).